Consider the following 229-residue polypeptide: Dephospho-CoA kinase (229 aa).

A DPCK domain is found at 3-203 (TVGLTGGIGS…ARRDAKATAK (201 aa)). 11–16 (GSGKSA) contacts ATP. The interval 203–229 (KATAKAETVASGTDTAASGTDTAAPAG) is disordered.

It belongs to the CoaE family.

Its subcellular location is the cytoplasm. It catalyses the reaction 3'-dephospho-CoA + ATP = ADP + CoA + H(+). The protein operates within cofactor biosynthesis; coenzyme A biosynthesis; CoA from (R)-pantothenate: step 5/5. Its function is as follows. Catalyzes the phosphorylation of the 3'-hydroxyl group of dephosphocoenzyme A to form coenzyme A. The sequence is that of Dephospho-CoA kinase from Frankia casuarinae (strain DSM 45818 / CECT 9043 / HFP020203 / CcI3).